The primary structure comprises 329 residues: Phenylalanine--tRNA ligase alpha subunit (329 aa).

Glu-253 serves as a coordination point for Mg(2+).

Belongs to the class-II aminoacyl-tRNA synthetase family. Phe-tRNA synthetase alpha subunit type 1 subfamily. In terms of assembly, tetramer of two alpha and two beta subunits. Mg(2+) serves as cofactor.

Its subcellular location is the cytoplasm. The enzyme catalyses tRNA(Phe) + L-phenylalanine + ATP = L-phenylalanyl-tRNA(Phe) + AMP + diphosphate + H(+). The chain is Phenylalanine--tRNA ligase alpha subunit from Coxiella burnetii (strain CbuK_Q154) (Coxiella burnetii (strain Q154)).